The chain runs to 384 residues: S-adenosylmethionine synthase (384 aa).

His15 contributes to the ATP binding site. Asp17 contributes to the Mg(2+) binding site. Glu43 provides a ligand contact to K(+). Positions 56 and 99 each coordinate L-methionine. The tract at residues 99–109 (QSPDINQGVDR) is flexible loop. ATP is bound by residues 164–166 (DAK), 230–231 (RF), Asp239, 245–246 (RK), Ala262, and Lys266. Residue Asp239 coordinates L-methionine. Position 270 (Lys270) interacts with L-methionine.

The protein belongs to the AdoMet synthase family. In terms of assembly, homotetramer; dimer of dimers. Mg(2+) is required as a cofactor. It depends on K(+) as a cofactor.

It is found in the cytoplasm. It catalyses the reaction L-methionine + ATP + H2O = S-adenosyl-L-methionine + phosphate + diphosphate. Its pathway is amino-acid biosynthesis; S-adenosyl-L-methionine biosynthesis; S-adenosyl-L-methionine from L-methionine: step 1/1. Its function is as follows. Catalyzes the formation of S-adenosylmethionine (AdoMet) from methionine and ATP. The overall synthetic reaction is composed of two sequential steps, AdoMet formation and the subsequent tripolyphosphate hydrolysis which occurs prior to release of AdoMet from the enzyme. This chain is S-adenosylmethionine synthase, found in Klebsiella pneumoniae subsp. pneumoniae (strain ATCC 700721 / MGH 78578).